The primary structure comprises 101 residues: MIKSELVQRIAEHNPHLYQRDVENIVNAILDEIVAALARGDRVELRGFGAFSVKHRPARAGRNPRTGAHVPVDQKSVPFFKTGKEMRERLNRDTGAPDSGA.

Residues 58–101 are disordered; it reads ARAGRNPRTGAHVPVDQKSVPFFKTGKEMRERLNRDTGAPDSGA. Over residues 82 to 92 the composition is skewed to basic and acidic residues; the sequence is TGKEMRERLNR.

It belongs to the bacterial histone-like protein family. Heterodimer of an alpha and a beta chain.

Functionally, this protein is one of the two subunits of integration host factor, a specific DNA-binding protein that functions in genetic recombination as well as in transcriptional and translational control. The sequence is that of Integration host factor subunit beta from Rhodopseudomonas palustris (strain BisB18).